We begin with the raw amino-acid sequence, 1730 residues long: SH3 and multiple ankyrin repeat domains protein 3 (1730 aa).

The interval 1–75 is intramolecular interaction with the ANK repeats; sequence MDGPGASAVV…KFLDEERLLQ (75 aa). Phosphotyrosine is present on tyrosine 122. ANK repeat units follow at residues 148 to 178, 182 to 211, 215 to 245, 249 to 278, 282 to 311, and 315 to 345; these read SGECPLSLAAQLDNATDLLKVLRNGGAHLDF, DGLTAVHCATRQRNAGALTTLLDLGASPDY, RGLTPLYHSALGGGDALCCELLLHDHAQLGT, NGWQEIHQACRFGHVQHLEHLLFYGANMGA, SGNTALHICALYNQESCARVLLFRGANKDV, and NSQTAFQVAIIAGNFELAEVIKTHKDSDVVP. Residues 354 to 466 are disordered; the sequence is KRRRLAGPSG…PPPRGPKRKL (113 aa). Phosphoserine occurs at positions 373, 375, 387, and 394. Basic and acidic residues predominate over residues 404 to 415; the sequence is LQEEKDRDRDGE. The span at 444-460 shows a compositional bias: pro residues; that stretch reads APGPGPASPAPPAPPPR. An SH3 domain is found at 470–529; that stretch reads VPGRKFIAVKAHSPQGEGEIPLHRGEAVKVLSIGEGGFWEGTVKGRTGWFPADCVEEVQM. Serine 482 is modified (phosphoserine). Tyrosine 555 is modified (phosphotyrosine). A PDZ domain is found at 570 to 664; the sequence is VAILQKRDHE…RLVMKVVSVT (95 aa). The tract at residues 664–688 is disordered; the sequence is TRKPEEDGARRRAPPPPKRAPSTTL. Residues 677 to 684 are required for interaction with ABI1; the sequence is PPPPKRAP. 4 positions are modified to phosphoserine: serine 694, serine 781, serine 790, and serine 801. Disordered regions lie at residues 760–1460 and 1475–1524; these read QGLP…AAGP and GDPV…SLLD. The span at 812-844 shows a compositional bias: pro residues; the sequence is IPPPPQTAPPPPPAPYYFDSGPPPTFSPPPPPG. Residues 857–869 show a composition bias toward low complexity; the sequence is GLEARLGAGAAGL. Phosphoserine occurs at positions 890 and 897. Threonine 912 is subject to Phosphothreonine. Tyrosine 930 is subject to Phosphotyrosine. Residue arginine 965 is modified to Asymmetric dimethylarginine. At serine 995 the chain carries Phosphoserine. The span at 1016-1026 shows a compositional bias: basic and acidic residues; sequence VKERRLEERRR. Positions 1078-1092 are enriched in low complexity; sequence LKPLVGGPSLGPSGS. The span at 1122–1131 shows a compositional bias: polar residues; sequence SQTPSRSPTP. At threonine 1130 the chain carries Phosphothreonine. Phosphoserine is present on residues serine 1134, serine 1159, serine 1163, and serine 1166. A compositionally biased stretch (basic and acidic residues) spans 1174–1194; that stretch reads ARREAEKPPREERKSPEDKKS. Position 1234 is a phosphothreonine (threonine 1234). The segment covering 1235-1250 has biased composition (low complexity); it reads PELAPAPMQAAAVAEP. 2 stretches are compositionally biased toward pro residues: residues 1251–1261 and 1321–1333; these read MPSPRAQPPGS and TPPPGPGPLPTTV. Phosphoserine is present on serine 1253. Over residues 1360–1370 the composition is skewed to basic and acidic residues; the sequence is ADTRSSSDPHL. Residues 1371–1392 show a composition bias toward low complexity; it reads ETTSTISTVSSMSTLSSESGEL. The SH3-binding signature appears at 1410-1416; that stretch reads PPVPPKP. Serine 1420 is subject to Phosphoserine. The stretch at 1494–1514 forms a coiled coil; it reads ISELSSRLQQLNKDTRSLGEE. Over residues 1495–1505 the composition is skewed to polar residues; sequence SELSSRLQQLN. Phosphoserine occurs at positions 1510, 1521, 1529, and 1539. 2 disordered regions span residues 1546 to 1584 and 1627 to 1663; these read ISAQRSPGGPGGGASYSVRPSGRYPVARRAPSPVKPASL and VRSVSARSRSPSPSPLPSPSPGSGPSAGPRRPFQQKP. Positions 1627-1637 are enriched in low complexity; it reads VRSVSARSRSP. 3 positions are modified to phosphoserine: serine 1634, serine 1636, and serine 1638. Residues 1638–1648 show a composition bias toward pro residues; the sequence is SPSPLPSPSPG. Residues 1649-1658 show a composition bias toward low complexity; it reads SGPSAGPRRP. The SAM domain occupies 1667-1730; that stretch reads WSKFDVGDWL…ERALRQLDGS (64 aa).

This sequence belongs to the SHANK family. In terms of assembly, may homomultimerize via its SAM domain. Interacts with BAIAP2, DBNL and SLC17A7/VGLUT1. Interacts with DLGAP1/GKAP, GRM1/MGLUR1, GRM5/MGLUR5 and LZTS3 C-termini via its PDZ domain. Interacts with ABI1, HOMER1, HOMER2, HOMER3 and CTTN/cortactin SH3 domain. Is part of a complex with DLG4/PSD-95 and DLGAP1/GKAP. Interacts (via PDZ domain) with the GRIA1 subunit of the AMPA receptor (via PDZ-binding motif). Interacts with WASF1 and CYFIP2; the interactions mediate the association of SHANK3 with the WAVE1 complex. Interacts with ARPC2; the interaction probably mediates the association of SHANK3 with the Arp2/3 complex. Interacts (via ANK repeats) with SHARPIN and SPTAN1. Interacts (via PDZ domain) with ARHGAP44 (probably via PDZ-binding motif); the interaction takes place in dendritic spines and promotes GRIA1 exocytosis. Interacts with CAMK2A. Interacts with DIP2A. Interacts with ADGRL3. In terms of tissue distribution, in brain, highly expressed in striatum, thalamus, hippocampus and granule cells of the cerebellum.

The protein localises to the cytoplasm. It is found in the synapse. The protein resides in the postsynaptic density. Its subcellular location is the cell projection. It localises to the dendritic spine. Major scaffold postsynaptic density protein which interacts with multiple proteins and complexes to orchestrate the dendritic spine and synapse formation, maturation and maintenance. Interconnects receptors of the postsynaptic membrane including NMDA-type and metabotropic glutamate receptors via complexes with GKAP/PSD-95 and HOMER, respectively, and the actin-based cytoskeleton. Plays a role in the structural and functional organization of the dendritic spine and synaptic junction through the interaction with Arp2/3 and WAVE1 complex as well as the promotion of the F-actin clusters. By way of this control of actin dynamics, participates in the regulation of developing neurons growth cone motility and the NMDA receptor-signaling. Also modulates GRIA1 exocytosis and GRM5/MGLUR5 expression and signaling to control the AMPA and metabotropic glutamate receptor-mediated synaptic transmission and plasticity. May be required at an early stage of synapse formation and be inhibited by IGF1 to promote synapse maturation. This is SH3 and multiple ankyrin repeat domains protein 3 (Shank3) from Mus musculus (Mouse).